The primary structure comprises 562 residues: Potassium voltage-gated channel subfamily V member 2 (562 aa).

Positions 1–10 are enriched in basic and acidic residues; that stretch reads MLKQSNERRW. The interval 1–34 is disordered; it reads MLKQSNERRWSLSYKPWSTPETEDVPNTGSNQHR. Topologically, residues 1–163 are cytoplasmic; that stretch reads MLKQSNERRW…TDEYFFDRDP (163 aa). Residues 164-184 form a helical membrane-spanning segment; that stretch reads AVFQLIYNFYTSGVLLVRDEL. At 185–269 the chain is on the extracellular side; the sequence is CPRSFLEELG…KPFSSVAAKA (85 aa). Residues 270 to 290 traverse the membrane as a helical segment; that stretch reads MGVATNLFVLISVVALALNTV. At 291 to 344 the chain is on the cytoplasmic side; that stretch reads EEMQHQAEQGTGGGDPRPILEHVEMLCVAFFTLEFLLRLASTPNLQRFARSALN. A helical membrane pass occupies residues 345 to 365; it reads LVDLVAILPFYLQLLLECFTS. Residues 366–391 lie on the Extracellular side of the membrane; it reads EDQRHNKDSPREHDLETVGRVGKVGQ. Residues 392-412 form a helical; Voltage-sensor membrane-spanning segment; that stretch reads VLRIMRLMRIFRILKLARHST. Topologically, residues 413–427 are cytoplasmic; the sequence is GLRAFGFTLRQCYQQ. The helical transmembrane segment at 428 to 448 threads the bilayer; it reads VGCLMLFITMGIFSFSAAVYS. Over 449-461 the chain is Extracellular; that stretch reads VEHDVPGTNFTSI. N-linked (GlcNAc...) asparagine glycosylation occurs at Asn457. The pore-forming intramembrane region spans 462–482; that stretch reads LHAWWWAAVSISTVGYGDMYP. The short motif at 474 to 479 is the Selectivity filter element; sequence TVGYGD. Residues 483–488 lie on the Extracellular side of the membrane; that stretch reads ETHLGR. Residues 489-509 traverse the membrane as a helical segment; that stretch reads LFAFLCIAFGIILNGMPISIL. The Cytoplasmic portion of the chain corresponds to 510-562; sequence YNKFSDYYSKLKAYEYTAIRRERGKVNFMQRATKKMAECLSESHAQSTTRQEN.

The protein belongs to the potassium channel family. V (TC 1.A.1.2) subfamily. Kv8.2/KCNV2 sub-subfamily. In terms of assembly, heteromultimer with KCNB1, KCNC1 and KCNF1. Does not form homomultimers.

The protein resides in the cell membrane. Potassium channel subunit. Modulates channel activity by shifting the threshold and the half-maximal activation to more negative values. The sequence is that of Potassium voltage-gated channel subfamily V member 2 (Kcnv2) from Mus musculus (Mouse).